The primary structure comprises 378 residues: Ribosomal RNA large subunit methyltransferase G (378 aa).

Belongs to the methyltransferase superfamily. RlmG family.

The protein localises to the cytoplasm. The catalysed reaction is guanosine(1835) in 23S rRNA + S-adenosyl-L-methionine = N(2)-methylguanosine(1835) in 23S rRNA + S-adenosyl-L-homocysteine + H(+). In terms of biological role, specifically methylates the guanine in position 1835 (m2G1835) of 23S rRNA. In Escherichia coli O9:H4 (strain HS), this protein is Ribosomal RNA large subunit methyltransferase G.